The following is a 293-amino-acid chain: Putative immediate early glycoprotein (293 aa).

The first 21 residues, 1–21 (MKKLTMESLSVYIFVMGVCFT), serve as a signal peptide directing secretion. 9 N-linked (GlcNAc...) asparagine; by host glycosylation sites follow: Asn23, Asn55, Asn83, Asn120, Asn150, Asn156, Asn168, Asn212, and Asn249. A helical transmembrane segment spans residues 262-282 (LFFLAGGAFTMLLLLCCLSMI).

This sequence belongs to the herpesviridae immediate early glycoprotein family.

The protein resides in the membrane. This is Putative immediate early glycoprotein (U18) from Human herpesvirus 6A (strain Uganda-1102) (HHV-6 variant A).